Here is a 151-residue protein sequence, read N- to C-terminus: Small ribosomal subunit protein uS13 (151 aa).

This sequence belongs to the universal ribosomal protein uS13 family. As to quaternary structure, part of the 30S ribosomal subunit. Forms a loose heterodimer with protein S19. Forms two bridges to the 50S subunit in the 70S ribosome.

Functionally, located at the top of the head of the 30S subunit, it contacts several helices of the 16S rRNA. In the 70S ribosome it contacts the 23S rRNA (bridge B1a) and protein L5 of the 50S subunit (bridge B1b), connecting the 2 subunits; these bridges are implicated in subunit movement. This is Small ribosomal subunit protein uS13 from Hyperthermus butylicus (strain DSM 5456 / JCM 9403 / PLM1-5).